The primary structure comprises 172 residues: CD-NTase-associated protein 7 (172 aa).

Positions 141 to 172 are required for binding to CdnC and to confer phage immunity; that stretch reads AQSPGINGYLENDKTYSAGGRSLTRTSVRNFV.

Belongs to the bacterial HORMA family. HORMA1 subfamily. In terms of assembly, forms complexes with CdnC with 1:1 and 2:2 stoichimetry, and a 1:1:6 CdnC:Cap7:Cap6 complex.

Sensor protein of a CBASS antivirus system. CBASS (cyclic oligonucleotide-based antiphage signaling system) provides immunity against bacteriophage. The CD-NTase protein synthesizes cyclic nucleotides in response to infection; these serve as specific second messenger signals. The signals activate a diverse range of effectors, leading to bacterial cell death and thus abortive phage infection. A type III-C(AAA) CBASS system. Functionally, binds to a closure peptide (consensus His-Xaa-Xaa-Ile-Leu-Leu-Thr), which allows it to activate CdnC for second messenger synthesis. In terms of biological role, protects E.coli strain JP313 against bacteriophage lambda cI- infection. When the cdnC-cap7-cap6-nucC operon is transformed into a susceptible strain it confers bacteriophage immunity. Mutations in the sensor (Cap7 also called HORMA) or effector proteins (CdnC, NucC) but not the disassembly protein (Cap6 also called Trip13) no longer confer immunity. The presence of the intact operon leads to culture collapse and cell death, which occurs before the phage has finished its replication cycle, thus protecting non-infected bacteria by aborting the phage infection and preventing its propagation. This Escherichia coli (strain MS 115-1) protein is CD-NTase-associated protein 7.